Here is a 234-residue protein sequence, read N- to C-terminus: uncharacterized protein (234 aa).

7 consecutive transmembrane segments (helical) span residues 25–45 (LMGA…TFFL), 57–77 (LFFL…QGLA), 85–105 (LPIF…TLLM), 108–128 (ATDI…LSVY), 142–162 (AFGV…FFAS), 163–183 (TGLT…LIAW), and 203–223 (WAIS…LFLL).

This sequence belongs to the BI1 family.

The protein resides in the cell membrane. This is an uncharacterized protein from Lactococcus lactis subsp. lactis (strain IL1403) (Streptococcus lactis).